The following is a 92-amino-acid chain: UPF0213 protein MGAS9429_Spy1198 (92 aa).

The GIY-YIG domain occupies 4–80; that stretch reads KKAYMYVLEC…KRKTRSQKLA (77 aa).

It belongs to the UPF0213 family.

This chain is UPF0213 protein MGAS9429_Spy1198, found in Streptococcus pyogenes serotype M12 (strain MGAS9429).